The chain runs to 600 residues: Glutamine--fructose-6-phosphate aminotransferase [isomerizing] (600 aa).

Cys2 acts as the Nucleophile; for GATase activity in catalysis. Residues 2–217 (CGIVGYIGQL…DKEMVIVTDD (216 aa)) enclose the Glutamine amidotransferase type-2 domain. 2 SIS domains span residues 283–422 (IAAA…KNGI) and 452–590 (IARE…VDKP). The For Fru-6P isomerization activity role is filled by Lys595.

In terms of assembly, homodimer.

It localises to the cytoplasm. It catalyses the reaction D-fructose 6-phosphate + L-glutamine = D-glucosamine 6-phosphate + L-glutamate. Its function is as follows. Catalyzes the first step in hexosamine metabolism, converting fructose-6P into glucosamine-6P using glutamine as a nitrogen source. This chain is Glutamine--fructose-6-phosphate aminotransferase [isomerizing], found in Bacillus subtilis (strain 168).